The following is a 268-amino-acid chain: Transcription initiation factor TFIID subunit 14b (268 aa).

Residues 1-20 are compositionally biased toward polar residues; the sequence is MTNSSSSKKQAQDQPETSEP. Positions 1-36 are disordered; that stretch reads MTNSSSSKKQAQDQPETSEPTLKSLKTKMTKSDEKQ. Residues 38-182 enclose the YEATS domain; that stretch reads KLKDIEISVP…ESFLARVQNH (145 aa). Residues 229–263 are a coiled coil; the sequence is DELLQLAAARQQVQAHIAKLRRQISLLEGQNQTVK.

The protein belongs to the YAF9 family. As to quaternary structure, component of the TFIID complex. TFIID is composed of TATA binding protein (TBP) and a number of TBP-associated factors (TAFs) whose MWs range from 14-217 kDa. Interacts with TAF1, TAF4B and TAF12B. Component of the SWR1 chromatin-remodeling complex. Interacts with FLX, a component of the transcription activator complex FRI-C. Interacts with SWC4, and with EAF1A and EAF1B (via HSA domain). In terms of tissue distribution, expressed in roots, leaves, inflorescence and flowering tissues.

It localises to the cytoplasm. Its subcellular location is the nucleus. Functionally, negative regulator of flowering controlling the H4K5 acetylation levels in the FLC and FT chromatin. Positively regulates FLC expression. Component of the transcription factor IID (TFIID) complex that is essential for mediating regulation of RNA polymerase transcription. Component of the SWR1 complex which mediates the ATP-dependent exchange of histone H2A for the H2A variant HZT1 leading to transcriptional regulation of selected genes by chromatin remodeling. Component of a NuA4 histone acetyltransferase complex which is involved in transcriptional activation of selected genes principally by acetylation of nucleosomal histones H4 and H2A. This chain is Transcription initiation factor TFIID subunit 14b, found in Arabidopsis thaliana (Mouse-ear cress).